We begin with the raw amino-acid sequence, 147 residues long: Large ribosomal subunit protein bL9 (147 aa).

Residues 44–63 (VKTLDAQKRSEDKRKEQEKL) form a disordered region. Positions 48 to 63 (DAQKRSEDKRKEQEKL) are enriched in basic and acidic residues.

It belongs to the bacterial ribosomal protein bL9 family.

Its function is as follows. Binds to the 23S rRNA. This Brevibacillus brevis (strain 47 / JCM 6285 / NBRC 100599) protein is Large ribosomal subunit protein bL9.